Reading from the N-terminus, the 340-residue chain is Glucokinase (340 aa).

Position 17–22 (17–22 (GDIGGT)) interacts with ATP.

This sequence belongs to the bacterial glucokinase family.

It is found in the cytoplasm. The enzyme catalyses D-glucose + ATP = D-glucose 6-phosphate + ADP + H(+). This Agrobacterium fabrum (strain C58 / ATCC 33970) (Agrobacterium tumefaciens (strain C58)) protein is Glucokinase.